A 498-amino-acid polypeptide reads, in one-letter code: Pyridine nucleotide-disulfide oxidoreductase domain-containing protein 1 (498 aa).

At methionine 1 the chain carries N-acetylmethionine.

This sequence belongs to the class-I pyridine nucleotide-disulfide oxidoreductase family. PYROXD1 subfamily. FAD serves as cofactor.

The protein localises to the nucleus. Its subcellular location is the cytoplasm. It localises to the myofibril. The protein resides in the sarcomere. Probable FAD-dependent oxidoreductase; involved in the cellular oxidative stress response. Required for normal sarcomere structure and muscle fiber integrity. The protein is Pyridine nucleotide-disulfide oxidoreductase domain-containing protein 1 (Pyroxd1) of Rattus norvegicus (Rat).